A 206-amino-acid chain; its full sequence is Cell division protein SepF (206 aa).

Residues 31 to 53 (EEKERRKTERQEQRQAVKQEKRT) are compositionally biased toward basic and acidic residues. The interval 31 to 81 (EEKERRKTERQEQRQAVKQEKRTFPSQRPAFSEEAPTSSSSKLSAASGSSD) is disordered. Residues 60 to 80 (AFSEEAPTSSSSKLSAASGSS) show a composition bias toward low complexity.

The protein belongs to the SepF family. In terms of assembly, homodimer. Interacts with FtsZ.

The protein resides in the cytoplasm. Functionally, cell division protein that is part of the divisome complex and is recruited early to the Z-ring. Probably stimulates Z-ring formation, perhaps through the cross-linking of FtsZ protofilaments. Its function overlaps with FtsA. The protein is Cell division protein SepF of Lachnoclostridium phytofermentans (strain ATCC 700394 / DSM 18823 / ISDg) (Clostridium phytofermentans).